Here is a 309-residue protein sequence, read N- to C-terminus: Serine/threonine-protein phosphatase PP2A catalytic subunit (309 aa).

The Mn(2+) site is built by aspartate 57, histidine 59, aspartate 85, and asparagine 117. The Proton donor role is filled by histidine 118. Mn(2+) contacts are provided by histidine 167 and histidine 241.

This sequence belongs to the PPP phosphatase family. PP-2A subfamily. Mn(2+) is required as a cofactor.

The enzyme catalyses O-phospho-L-seryl-[protein] + H2O = L-seryl-[protein] + phosphate. It carries out the reaction O-phospho-L-threonyl-[protein] + H2O = L-threonyl-[protein] + phosphate. In Brassica napus (Rape), this protein is Serine/threonine-protein phosphatase PP2A catalytic subunit.